Here is a 593-residue protein sequence, read N- to C-terminus: DNA topoisomerase I, mitochondrial (593 aa).

A mitochondrion-targeting transit peptide spans 1 to 43; it reads MLLLWLRALCRRFQHVPRRVPSRQVSRGSKASRAGWGETSKSS. Interaction with DNA stretches follow at residues 254–255, 317–322, and 414–416; these read KY, RTGNEK, and TAK. Residues 261 to 593 enclose the Topo IB-type catalytic domain; that stretch reads SSKPKGEMDW…FNQAGEDFEF (333 aa). Y551 acts as the O-(3'-phospho-DNA)-tyrosine intermediate in catalysis.

The protein belongs to the type IB topoisomerase family. The cofactor is Ca(2+). Mg(2+) is required as a cofactor.

The protein resides in the mitochondrion. The enzyme catalyses ATP-independent breakage of single-stranded DNA, followed by passage and rejoining.. Releases the supercoiling and torsional tension of DNA introduced during duplication of mitochondrial DNA by transiently cleaving and rejoining one strand of the DNA duplex. Introduces a single-strand break via transesterification at a target site in duplex DNA. The scissile phosphodiester is attacked by the catalytic tyrosine of the enzyme, resulting in the formation of a DNA-(3'-phosphotyrosyl)-enzyme intermediate and the expulsion of a 5'-OH DNA strand. The free DNA strand then rotates around the intact phosphodiester bond on the opposing strand, thus removing DNA supercoils. Finally, in the religation step, the DNA 5'-OH attacks the covalent intermediate to expel the active-site tyrosine and restore the DNA phosphodiester backbone. This chain is DNA topoisomerase I, mitochondrial (Top1mt), found in Rattus norvegicus (Rat).